Here is a 594-residue protein sequence, read N- to C-terminus: Neopentalenolactone D synthase (594 aa).

Residues 64 to 65, 86 to 87, 94 to 95, 106 to 107, Y112, V156, and M494 each bind FAD; these read IG, DK, TW, and DV.

The protein belongs to the FAD-binding monooxygenase family. The cofactor is FAD.

It catalyses the reaction 1-deoxy-11-oxopentalenate + NADPH + O2 + H(+) = neopentalenolactone D + NADP(+) + H2O. The protein operates within antibiotic biosynthesis; neopentalenolactone biosynthesis. Functionally, catalyzes the flavin-dependent Baeyer-Villiger oxidation of 1-deoxy-11-oxopentalenic acid to neopentalenolactone D in the biosynthesis of neopentalenolactone antibiotic. The chain is Neopentalenolactone D synthase (ptlE) from Streptomyces avermitilis (strain ATCC 31267 / DSM 46492 / JCM 5070 / NBRC 14893 / NCIMB 12804 / NRRL 8165 / MA-4680).